Here is a 475-residue protein sequence, read N- to C-terminus: Aspartyl/glutamyl-tRNA(Asn/Gln) amidotransferase subunit B (475 aa).

This sequence belongs to the GatB/GatE family. GatB subfamily. Heterotrimer of A, B and C subunits.

The catalysed reaction is L-glutamyl-tRNA(Gln) + L-glutamine + ATP + H2O = L-glutaminyl-tRNA(Gln) + L-glutamate + ADP + phosphate + H(+). The enzyme catalyses L-aspartyl-tRNA(Asn) + L-glutamine + ATP + H2O = L-asparaginyl-tRNA(Asn) + L-glutamate + ADP + phosphate + 2 H(+). Functionally, allows the formation of correctly charged Asn-tRNA(Asn) or Gln-tRNA(Gln) through the transamidation of misacylated Asp-tRNA(Asn) or Glu-tRNA(Gln) in organisms which lack either or both of asparaginyl-tRNA or glutaminyl-tRNA synthetases. The reaction takes place in the presence of glutamine and ATP through an activated phospho-Asp-tRNA(Asn) or phospho-Glu-tRNA(Gln). This Pediococcus pentosaceus (strain ATCC 25745 / CCUG 21536 / LMG 10740 / 183-1w) protein is Aspartyl/glutamyl-tRNA(Asn/Gln) amidotransferase subunit B.